Consider the following 88-residue polypeptide: Small ribosomal subunit protein uS15c (88 aa).

Belongs to the universal ribosomal protein uS15 family. Part of the 30S ribosomal subunit.

Its subcellular location is the plastid. The protein localises to the chloroplast. The sequence is that of Small ribosomal subunit protein uS15c (rps15) from Cycas taitungensis (Prince sago).